The sequence spans 1087 residues: Gelsolin-related protein of 125 kDa (1087 aa).

The interval 1–40 (MEEDNIVDSKEIENNVEDKKEETPSSSPSPSSSLQQQQEE) is disordered. Residues 7 to 23 (VDSKEIENNVEDKKEET) show a composition bias toward basic and acidic residues. Over residues 24–40 (PSSSPSPSSSLQQQQEE) the composition is skewed to low complexity. Gelsolin-like repeat units follow at residues 73–146 (PFHF…PTFL), 183–286 (FLFK…FSKW), 335–442 (GKLL…FGTE), and 465–538 (TQLF…DNFW). The stretch at 550–598 (INTFINENKEEKEKEEEEKEEEEEEEEEEEEEEEEEKDNNKTTTIIKHL) forms a coiled coil. The tract at residues 555 to 592 (NENKEEKEKEEEEKEEEEEEEEEEEEEEEEEKDNNKTT) is disordered. The segment covering 562 to 586 (EKEEEEKEEEEEEEEEEEEEEEEEK) has biased composition (acidic residues). Residues 614-692 (IFKADQINPF…EQYNESPLFK (79 aa)) form a Gelsolin-like 5 repeat. A coiled-coil region spans residues 710–912 (IISYKQKLAE…ETVNEENEVG (203 aa)). Basic and acidic residues-rich tracts occupy residues 732-770 (KQQQEQEQEQQQKENNKIVEEVKEEVKEEDVKEEVKEEE), 779-808 (EEVKEVAKEETKEEIKEEVNDEATEVKEVN), 817-840 (EEVKEEVKVEVKEEEVKGEAKEEE), and 849-900 (EEVK…KVNE). The interval 732–1087 (KQQQEQEQEQ…HNRSSSLTHA (356 aa)) is disordered. Over residues 901-910 (ENETVNEENE) the composition is skewed to acidic residues. 2 stretches are compositionally biased toward polar residues: residues 925–939 (ANSSSTISSPENEGS) and 950–961 (EPITPSVVSSSG). The segment covering 983–1002 (QGRKGGRKSHGKNQPQHKKN) has biased composition (basic residues). Residues 1018-1040 (KSLNLDIDNQSFDLNSINNNNSV) are compositionally biased toward polar residues. Positions 1047–1065 (SSPLSFSSSSINSNSTHNT) are enriched in low complexity. Basic residues predominate over residues 1066 to 1080 (PSKKNKNKNKKKHNR).

Belongs to the villin/gelsolin family. Interacts with rasD and abpC.

The protein resides in the cytoplasmic vesicle. In terms of biological role, involved in phototaxis. Required for coupling photodetection to the locomotory machinery of slugs. May be essential in the natural environment for the propagation of spores. This Dictyostelium discoideum (Social amoeba) protein is Gelsolin-related protein of 125 kDa (gnrA).